The chain runs to 395 residues: Indoleacetate--lysine synthetase (395 aa).

It belongs to the ATP-dependent AMP-binding enzyme family.

The enzyme catalyses (indol-3-yl)acetate + L-lysine + ATP = N(6)-[(indole-3-yl)acetyl]-L-lysine + ADP + phosphate + H(+). Conversion of IAA to IAA-lysine. The sequence is that of Indoleacetate--lysine synthetase (iaaL) from Pseudomonas savastanoi (Pseudomonas syringae pv. savastanoi).